A 415-amino-acid polypeptide reads, in one-letter code: Hepatocyte nuclear factor 3-beta (415 aa).

The segment at residues 150-244 (KPPYSYISLI…ENGCYLRRQK (95 aa)) is a DNA-binding region (fork-head). A compositionally biased stretch (basic and acidic residues) spans 251-262 (KMSMKEPGRKGG). The disordered stretch occupies residues 251-324 (KMSMKEPGRK…GQHLMSQHHS (74 aa)). Positions 266-277 (SANSSSDSCNGN) are enriched in low complexity. The span at 310 to 323 (SPVSQGQHLMSQHH) shows a compositional bias: polar residues.

Its subcellular location is the nucleus. In terms of biological role, transcription activator for a number of liver genes. Interacts with the cis-acting regulatory regions of these genes. The protein is Hepatocyte nuclear factor 3-beta (foxa2) of Oryzias latipes (Japanese rice fish).